Reading from the N-terminus, the 309-residue chain is Homoserine O-acetyltransferase (309 aa).

The Acyl-thioester intermediate role is filled by Cys142. 2 residues coordinate substrate: Lys163 and Ser192. Catalysis depends on His235, which acts as the Proton acceptor. Glu237 is a catalytic residue. Arg249 lines the substrate pocket.

It belongs to the MetA family.

It is found in the cytoplasm. The catalysed reaction is L-homoserine + acetyl-CoA = O-acetyl-L-homoserine + CoA. It functions in the pathway amino-acid biosynthesis; L-methionine biosynthesis via de novo pathway; O-acetyl-L-homoserine from L-homoserine: step 1/1. Its function is as follows. Transfers an acetyl group from acetyl-CoA to L-homoserine, forming acetyl-L-homoserine. In Allorhizobium ampelinum (strain ATCC BAA-846 / DSM 112012 / S4) (Agrobacterium vitis (strain S4)), this protein is Homoserine O-acetyltransferase.